We begin with the raw amino-acid sequence, 148 residues long: Meiosis inducing protein mei3 (148 aa).

Positions 1–20 (MSSQNTSNSRHPASSASALP) are enriched in polar residues. The interval 1-96 (MSSQNTSNSR…AQRIEHENKE (96 aa)) is disordered. Positions 21–46 (NRTNTARRSTSPRTSTGSSSTNTNTK) are enriched in low complexity. Residues 75-86 (PMKRTKRVRRTP) show a composition bias toward basic residues.

Functionally, acts as a critical meiotic inducer by binding non-covalently to protein kinase ran1/pat1 inhibiting its enzymatic activity. Inhibits ran1/pat1 by acting as a pseudosubstrate for ran1/pat1 instead of its natural substrate ste11. Inactivation of the ran1/pat1 protein kinase is both necessary and sufficient to divert a vegetative cell from mitotic division to meiotic differentiation. In Schizosaccharomyces pombe (strain 972 / ATCC 24843) (Fission yeast), this protein is Meiosis inducing protein mei3.